The primary structure comprises 399 residues: Argininosuccinate synthase (399 aa).

Position 9–17 (9–17) interacts with ATP; that stretch reads AYSGGLDTS. Y85 serves as a coordination point for L-citrulline. G115 serves as a coordination point for ATP. Positions 117, 121, and 122 each coordinate L-aspartate. An L-citrulline-binding site is contributed by N121. L-citrulline-binding residues include R125, S173, E258, and Y270.

The protein belongs to the argininosuccinate synthase family. Type 1 subfamily. As to quaternary structure, homotetramer.

The protein resides in the cytoplasm. The enzyme catalyses L-citrulline + L-aspartate + ATP = 2-(N(omega)-L-arginino)succinate + AMP + diphosphate + H(+). It participates in amino-acid biosynthesis; L-arginine biosynthesis; L-arginine from L-ornithine and carbamoyl phosphate: step 2/3. The sequence is that of Argininosuccinate synthase from Streptococcus gordonii (strain Challis / ATCC 35105 / BCRC 15272 / CH1 / DL1 / V288).